The chain runs to 181 residues: Large ribosomal subunit protein uL6 (181 aa).

It belongs to the universal ribosomal protein uL6 family. As to quaternary structure, part of the 50S ribosomal subunit.

Its function is as follows. This protein binds to the 23S rRNA, and is important in its secondary structure. It is located near the subunit interface in the base of the L7/L12 stalk, and near the tRNA binding site of the peptidyltransferase center. The chain is Large ribosomal subunit protein uL6 from Ruthia magnifica subsp. Calyptogena magnifica.